A 156-amino-acid chain; its full sequence is Small ribosomal subunit protein uS7 (156 aa).

It belongs to the universal ribosomal protein uS7 family. In terms of assembly, part of the 30S ribosomal subunit. Contacts proteins S9 and S11.

Functionally, one of the primary rRNA binding proteins, it binds directly to 16S rRNA where it nucleates assembly of the head domain of the 30S subunit. Is located at the subunit interface close to the decoding center, probably blocks exit of the E-site tRNA. This Alkaliphilus oremlandii (strain OhILAs) (Clostridium oremlandii (strain OhILAs)) protein is Small ribosomal subunit protein uS7.